The primary structure comprises 964 residues: Pumilio homolog 3 (964 aa).

The tract at residues 1 to 22 is disordered; sequence MMIPELGRRPMHRGNEDSSFGD. Ser192 is modified (phosphoserine). Disordered stretches follow at residues 204-235, 256-300, and 343-388; these read PVVQ…ASQG, GTPD…TSGL, and DGHN…VANP. Polar residues-rich tracts occupy residues 207–216 and 223–234; these read QQPSRPASRN and DSNNNLSPSASQ. Thr257 carries the phosphothreonine modification. Polar residues-rich tracts occupy residues 287–300 and 356–384; these read TSNQ…TSGL and RSDQ…SGSG. The PUM-HD domain occupies 606-946; it reads FGSSMLEEFK…HIVARVEKLV (341 aa). 8 Pumilio repeats span residues 626–661, 662–697, 698–733, 734–769, 770–806, 807–842, 843–878, and 879–920; these read EIAG…MVYE, EIMP…ELGE, KLID…QMVK, ELDG…FIIS, TFFG…KVME, EILS…VIIK, ELAG…LLVN, and EMLG…LILT.

It is found in the cytoplasm. Its function is as follows. Sequence-specific RNA-binding protein that regulates translation and mRNA stability by binding the 3'-UTR of target mRNAs. Binds the APUM-binding elements (APBEs) in the 3'-UTR mRNA sequence of CLV1, PNH, WUS and FAS2. In Arabidopsis thaliana (Mouse-ear cress), this protein is Pumilio homolog 3 (APUM3).